The chain runs to 184 residues: MLSEESGYLVQVELDVQDCFFESFPEAAQASGYMDSQVSPATWQDWFHRWLEILDSSLPPAPSYEIGLRLTDDTEIQAINAQYRQQNKPTDVLAFAALEVDLPQNPEMVAEPLYLGDIVVSINTAQRQAGQQEHSLSTELAWLTAHGLLHLLGWDHPDEESLIAMLQQQVVLLEAIGININVNY.

Zn(2+) is bound by residues His146, His150, and His156.

The protein belongs to the endoribonuclease YbeY family. Zn(2+) is required as a cofactor.

Its subcellular location is the cytoplasm. In terms of biological role, single strand-specific metallo-endoribonuclease involved in late-stage 70S ribosome quality control and in maturation of the 3' terminus of the 16S rRNA. The polypeptide is Endoribonuclease YbeY (Nostoc sp. (strain PCC 7120 / SAG 25.82 / UTEX 2576)).